The chain runs to 639 residues: MTLEITGSELIKSKLIDAPERSGVYRMFDVNKQVLYVGKAKNLKKRLTNYIKSNLDNKTLRMIANTCFLEYSITNSEVEALLLEAQLIKKFQPKFNILLKDCKSFPFIKLRLEHDFPQLLKYRGKTLSDGKFFGPFASSVDVNTTLTELQKIFKLRSCTDNYFNSRTRPCLQYEIKRCYAPCVGKINKEDYRDLVTQVKDFLQGRTKELQENLSRKMEELSSQMRFEEAAEIRDRIKALSYVQLKAGVSDVVKDADIIAIVEKNGHYCVEVFLYRAGQACGNIPYFPTSTENSTKEEVLEYFLLQFYQKQHVPAAIIINHEINDKENVIEAIKKINNILQLNITVPNKGGKAKLVQNAEINALFSLEQYLKKFAKNQEIIFEIKELFGLSAIPERIEIYDNSHIQGKFAVGVMVVAGKVGFDKKEYRVFNVYAPSLVCHSRESGDPKRLMDSCFRGNGIKNCWGDIKGDDYEMLRQVLTRRLTRLRQEPHKLPSLMIIDGGKGHLGVVKEVMDKFEMNIPFVCMSKGVDRNAGFEQFHVIGKEVFTLDKNLPVMKYLQILRDEAHNFAIKNHRLGRSRAIKISRLDDIEGVGETRKKALLHYFGSYKAVCDATIYELAKVNGINKLLAEMIFNVLHRKN.

Residues 20 to 97 enclose the GIY-YIG domain; the sequence is ERSGVYRMFD…IKKFQPKFNI (78 aa). In terms of domain architecture, UVR spans 207–242; that stretch reads KELQENLSRKMEELSSQMRFEEAAEIRDRIKALSYV.

This sequence belongs to the UvrC family. Interacts with UvrB in an incision complex.

The protein localises to the cytoplasm. The UvrABC repair system catalyzes the recognition and processing of DNA lesions. UvrC both incises the 5' and 3' sides of the lesion. The N-terminal half is responsible for the 3' incision and the C-terminal half is responsible for the 5' incision. In Rickettsia rickettsii (strain Iowa), this protein is UvrABC system protein C.